Consider the following 426-residue polypeptide: Serine--tRNA ligase (426 aa).

233–235 serves as a coordination point for L-serine; the sequence is TSE. 264-266 serves as a coordination point for ATP; it reads RSE. Residue glutamate 287 coordinates L-serine. ATP is bound at residue 351–354; that stretch reads EISS. Serine 387 lines the L-serine pocket.

This sequence belongs to the class-II aminoacyl-tRNA synthetase family. Type-1 seryl-tRNA synthetase subfamily. In terms of assembly, homodimer. The tRNA molecule binds across the dimer.

It localises to the cytoplasm. The enzyme catalyses tRNA(Ser) + L-serine + ATP = L-seryl-tRNA(Ser) + AMP + diphosphate + H(+). It carries out the reaction tRNA(Sec) + L-serine + ATP = L-seryl-tRNA(Sec) + AMP + diphosphate + H(+). It functions in the pathway aminoacyl-tRNA biosynthesis; selenocysteinyl-tRNA(Sec) biosynthesis; L-seryl-tRNA(Sec) from L-serine and tRNA(Sec): step 1/1. Its function is as follows. Catalyzes the attachment of serine to tRNA(Ser). Is also able to aminoacylate tRNA(Sec) with serine, to form the misacylated tRNA L-seryl-tRNA(Sec), which will be further converted into selenocysteinyl-tRNA(Sec). This is Serine--tRNA ligase from Xylella fastidiosa (strain M23).